We begin with the raw amino-acid sequence, 234 residues long: Sugar fermentation stimulation protein A (234 aa).

The H-T-H motif DNA-binding region spans 201–220; the sequence is LLSEAQQRGVEILAYKAELS.

It belongs to the SfsA family.

Its function is as follows. Binds to DNA non-specifically. Could be a regulatory factor involved in maltose metabolism. The chain is Sugar fermentation stimulation protein A from Escherichia coli O127:H6 (strain E2348/69 / EPEC).